A 464-amino-acid polypeptide reads, in one-letter code: Fumarate hydratase class II (464 aa).

Substrate contacts are provided by residues 98-100, 129-132, 139-141, and T187; these read SGT, HPND, and SSN. H188 (proton donor/acceptor) is an active-site residue. S318 is an active-site residue. Residues S319 and 324–326 each bind substrate; that span reads KVN.

Belongs to the class-II fumarase/aspartase family. Fumarase subfamily. As to quaternary structure, homotetramer.

It localises to the cytoplasm. It carries out the reaction (S)-malate = fumarate + H2O. It participates in carbohydrate metabolism; tricarboxylic acid cycle; (S)-malate from fumarate: step 1/1. Functionally, involved in the TCA cycle. Catalyzes the stereospecific interconversion of fumarate to L-malate. This chain is Fumarate hydratase class II, found in Haemophilus influenzae (strain ATCC 51907 / DSM 11121 / KW20 / Rd).